The following is a 78-amino-acid chain: UPF0349 protein BH3414 (78 aa).

The protein belongs to the UPF0349 family.

This Halalkalibacterium halodurans (strain ATCC BAA-125 / DSM 18197 / FERM 7344 / JCM 9153 / C-125) (Bacillus halodurans) protein is UPF0349 protein BH3414.